The primary structure comprises 98 residues: C-X-C motif chemokine 10 (98 aa).

Positions 1-21 (MNQSAVLIFCLIFLTLNGTQG) are cleaved as a signal peptide. At arginine 26 the chain carries Citrulline. 2 disulfide bridges follow: cysteine 30–cysteine 57 and cysteine 32–cysteine 74.

Belongs to the intercrine alpha (chemokine CxC) family. As to quaternary structure, monomer, dimer, and tetramer. Interacts with CXCR3 (via N-terminus).

The protein resides in the secreted. Pro-inflammatory cytokine that is involved in a wide variety of processes such as chemotaxis, differentiation, and activation of peripheral immune cells, regulation of cell growth, apoptosis and modulation of angiostatic effects. Plays thereby an important role during viral infections by stimulating the activation and migration of immune cells to the infected sites. Mechanistically, binding of CXCL10 to the CXCR3 receptor activates G protein-mediated signaling and results in downstream activation of phospholipase C-dependent pathway, an increase in intracellular calcium production and actin reorganization. In turn, recruitment of activated Th1 lymphocytes occurs at sites of inflammation. Activation of the CXCL10/CXCR3 axis also plays an important role in neurons in response to brain injury for activating microglia, the resident macrophage population of the central nervous system, and directing them to the lesion site. This recruitment is an essential element for neuronal reorganization. The protein is C-X-C motif chemokine 10 (CXCL10) of Canis lupus familiaris (Dog).